Reading from the N-terminus, the 286-residue chain is D-tagatose-1,6-bisphosphate aldolase subunit KbaY (286 aa).

Asp-82 functions as the Proton donor in the catalytic mechanism. His-83 and His-180 together coordinate Zn(2+). Gly-181 lines the dihydroxyacetone phosphate pocket. Residue His-208 participates in Zn(2+) binding. Dihydroxyacetone phosphate is bound by residues 209–211 and 230–233; these read GAS and NVAT.

The protein belongs to the class II fructose-bisphosphate aldolase family. TagBP aldolase KbaY subfamily. As to quaternary structure, homotetramer. Forms a complex with KbaZ. The cofactor is Zn(2+).

The catalysed reaction is D-tagatofuranose 1,6-bisphosphate = D-glyceraldehyde 3-phosphate + dihydroxyacetone phosphate. The protein operates within carbohydrate metabolism; D-tagatose 6-phosphate degradation; D-glyceraldehyde 3-phosphate and glycerone phosphate from D-tagatose 6-phosphate: step 2/2. Catalytic subunit of the tagatose-1,6-bisphosphate aldolase KbaYZ, which catalyzes the reversible aldol condensation of dihydroxyacetone phosphate (DHAP or glycerone-phosphate) with glyceraldehyde 3-phosphate (G3P) to produce tagatose 1,6-bisphosphate (TBP). Requires KbaZ subunit for full activity and stability. The protein is D-tagatose-1,6-bisphosphate aldolase subunit KbaY of Escherichia coli O7:K1 (strain IAI39 / ExPEC).